Here is a 155-residue protein sequence, read N- to C-terminus: Small ribosomal subunit protein uS7 (155 aa).

It belongs to the universal ribosomal protein uS7 family. As to quaternary structure, part of the 30S ribosomal subunit. Contacts proteins S9 and S11.

Functionally, one of the primary rRNA binding proteins, it binds directly to 16S rRNA where it nucleates assembly of the head domain of the 30S subunit. Is located at the subunit interface close to the decoding center, probably blocks exit of the E-site tRNA. The polypeptide is Small ribosomal subunit protein uS7 (Chloroherpeton thalassium (strain ATCC 35110 / GB-78)).